The primary structure comprises 1322 residues: MNISKFFLIFIPLVLFKYPANNELINYNVILKYDVKDLFKRVLQEQNEDIKDDNDENDEGDEEDEYYSYLKNRGTNEFDKVKYKYAEYVRFSIFKSKNIYTHIFNELLVFLGAQYGTEEEIVVHVKLIDILSLLFTHYKDNLSKFGHILNSFQDRSKLMNSVENEFMNEFINERDNYIYDVKNAYNKSDNNDDEWIETVLNKKNMLYDKFLKEWRIDGSNFYSIHNKKKTYLPKKVFQNKQNYIPDFENMEHVDLVCKPISDSAIDEKSAEKYEDKELNINEQNEQSNSKKEQTGNDNVSETKMHKEESSDSSNKTDESNVCKSENKYIKKTNNNKKIKEERHGFIYKMRNDFFLSDASLNVISLINSITSNEENKIVKKLYTGLKKLKITTFDNLIRYTNIIGIFFSYDIFDELYLQIKLIKEYFGLIPRNNDELSIVSKSKNVSKIKVYGKYNITDDEMFVPPVCLSAYCKLRSVWMQNRDFNFKIEKYSSNSINFMTLGDIGRGFKKENSYDEEQMLKLIGFNELKSTSNAMKDWHASNNADFVINLGDNVPEVDELDYLKNFEWHKIMRELFTFRKQDEDEEKNDADSYSITKDNIQEFYKEVEKQMNNTNTDDKNQHNDISTTPINNYTDGNEGNNNSENNNGFREYINDNTKDYNIYKNETTEKEETYDSIPFFSIFGEKDYFYFPSEQIQEHYAKRIPGYFFPNNYYRINYDFVYNNKEKNGVQEKFKASFIFIDTWSLMIGFPIIRNYRSFREQFNWINKALLESAKESDWIFVVGHHPFISSGRRSDNYSFEELSFHNIIRNFFFYYNIDGYFSAHDNLMEYLNFGPLNLFVNGSSSRVLFDKSTILGRGYFGKMVGSIYPVTCYLLTTIHSALRPKGCDISKYSKWSNKYDIGFSAHKLSKDELVTEFINSRSGKPVSQKIVIKNKKDKRRKFYDLDGYTNDKIKQFENKIYEFSSKNPNFIKYKIEEFKENDKKLNIIMNNLKSEEEKDAFRSLMFLNNLIFGISSHISNISFDQLKLMCYLANKYRTFFNKKLIKFLGEELKIAVQKMEVKTTNETPHNSNEILNTNENESIQPNDPTMKVEQIMELIDTLGYKPDEFLEKYDAMTQEEKDALKEKLGNDVSLEDYLSKVKMYIHKKKLSAEELKEYEENEENIKIAEVPDESKEDDNTNSQPEDTIDQENKDDINDIINAPNEVHKNYKELVEKEKKLTENEHALLMLSSLKTYDEMKYSLNILSKKEVIKEEAHPYGLYYIEKHKTFFQVSLELCPDIKRIISNLGKVGTKLAFYDYINNLYNKIMDLKNSIDKIAIF.

Positions 1-22 (MNISKFFLIFIPLVLFKYPANN) are cleaved as a signal peptide. Residues 1 to 535 (MNISKFFLIF…NELKSTSNAM (535 aa)) form an interaction with phosphorylated eIF2alpha region. Composition is skewed to basic and acidic residues over residues 267–279 (EKSA…KELN) and 288–326 (NSKK…KSEN). Disordered regions lie at residues 267 to 326 (EKSA…KSEN), 613 to 646 (NTNT…SENN), 1066 to 1087 (NETP…IQPN), and 1170 to 1196 (EVPD…NKDD). Residues 631–646 (NNYTDGNEGNNNSENN) show a composition bias toward low complexity.

Requires Mn(2+) as cofactor.

The catalysed reaction is O-phospho-L-seryl-[protein] + H2O = L-seryl-[protein] + phosphate. Protein phosphatase which dephosphorylates 'Ser-59' of translation factor eIF2alpha during the liver stage, thus enabling protein translation. The protein is Serine/threonine-protein phosphatase UIS2 of Plasmodium berghei (strain Anka).